Consider the following 202-residue polypeptide: Small ribosomal subunit protein uS4c (202 aa).

Residues 90–153 enclose the S4 RNA-binding domain; the sequence is MRLDNIIFRL…KSEAIISKNI (64 aa).

Belongs to the universal ribosomal protein uS4 family. As to quaternary structure, part of the 30S ribosomal subunit. Contacts protein S5. The interaction surface between S4 and S5 is involved in control of translational fidelity.

Its subcellular location is the plastid. It localises to the chloroplast. In terms of biological role, one of the primary rRNA binding proteins, it binds directly to 16S rRNA where it nucleates assembly of the body of the 30S subunit. Its function is as follows. With S5 and S12 plays an important role in translational accuracy. This is Small ribosomal subunit protein uS4c (rps4) from Hookeria lucens (Moss).